A 130-amino-acid chain; its full sequence is Flagellar assembly factor FliW (130 aa).

Belongs to the FliW family. Interacts with translational regulator CsrA and flagellin(s).

It is found in the cytoplasm. Its function is as follows. Acts as an anti-CsrA protein, binds CsrA and prevents it from repressing translation of its target genes, one of which is flagellin. Binds to flagellin and participates in the assembly of the flagellum. This chain is Flagellar assembly factor FliW, found in Borrelia duttonii (strain Ly).